Reading from the N-terminus, the 682-residue chain is Potassium-transporting ATPase ATP-binding subunit (682 aa).

Helical transmembrane passes span 34–54 (PVMFVVWAGSVLTTLLTLAMV), 58–78 (IAGSALFTGIISLWLWFTVLF), 219–239 (IALTILLIALTIVFLLATATL), and 254–274 (VLVALLVCLIPTTIGGLLSAI). Asp307 acts as the 4-aspartylphosphate intermediate in catalysis. ATP is bound by residues Asp344, Glu348, 377–384 (FTAQSRMS), and Lys395. Mg(2+) contacts are provided by Asp518 and Asp522. Transmembrane regions (helical) follow at residues 588–608 (FAIIPAAFAATYPQLNALNVM), 616–636 (AILSAVIFNALIIIFLIPLAL), and 662–682 (LVVPFIGIKVIDVLLTLLGLA).

The protein belongs to the cation transport ATPase (P-type) (TC 3.A.3) family. Type IA subfamily. As to quaternary structure, the system is composed of three essential subunits: KdpA, KdpB and KdpC.

It is found in the cell inner membrane. The enzyme catalyses K(+)(out) + ATP + H2O = K(+)(in) + ADP + phosphate + H(+). Its function is as follows. Part of the high-affinity ATP-driven potassium transport (or Kdp) system, which catalyzes the hydrolysis of ATP coupled with the electrogenic transport of potassium into the cytoplasm. This subunit is responsible for energy coupling to the transport system and for the release of the potassium ions to the cytoplasm. This is Potassium-transporting ATPase ATP-binding subunit from Salmonella typhimurium (strain LT2 / SGSC1412 / ATCC 700720).